A 253-amino-acid chain; its full sequence is Phosphoadenosine 5'-phosphosulfate reductase (253 aa).

The active-site Nucleophile; cysteine thiosulfonate intermediate is Cys239.

The protein belongs to the PAPS reductase family. CysH subfamily.

It is found in the cytoplasm. It catalyses the reaction [thioredoxin]-disulfide + sulfite + adenosine 3',5'-bisphosphate + 2 H(+) = [thioredoxin]-dithiol + 3'-phosphoadenylyl sulfate. The protein operates within sulfur metabolism; hydrogen sulfide biosynthesis; sulfite from sulfate: step 3/3. Functionally, catalyzes the formation of sulfite from phosphoadenosine 5'-phosphosulfate (PAPS) using thioredoxin as an electron donor. The sequence is that of Phosphoadenosine 5'-phosphosulfate reductase from Aliivibrio fischeri (strain MJ11) (Vibrio fischeri).